Consider the following 88-residue polypeptide: Large ribosomal subunit protein eL34 (88 aa).

It belongs to the eukaryotic ribosomal protein eL34 family.

This chain is Large ribosomal subunit protein eL34, found in Methanobrevibacter smithii (strain ATCC 35061 / DSM 861 / OCM 144 / PS).